The following is a 198-amino-acid chain: Interferon gamma (198 aa).

An N-terminal signal peptide occupies residues 1–23 (MMVSTARAVVCLSLCLCVCQVRG). N31, N42, and N174 each carry an N-linked (GlcNAc...) asparagine glycan. Positions 173-198 (SNNTKMQRRRRRRRRQARKVKTPTRA) are disordered. Residues 178–198 (MQRRRRRRRRQARKVKTPTRA) show a composition bias toward basic residues.

The protein belongs to the type II (or gamma) interferon family. Homodimer.

It localises to the secreted. In terms of biological role, cytokine which binds to interferon gamma receptor 1 (ifngr1). Also binds with lower affinity to interferon gamma receptor 1-like (ifngr1l). Has activating effects on macrophages and neutrophils. This Paralichthys olivaceus (Bastard halibut) protein is Interferon gamma.